The sequence spans 307 residues: Branched-chain-amino-acid aminotransferase (307 aa).

N6-(pyridoxal phosphate)lysine is present on lysine 160.

It belongs to the class-IV pyridoxal-phosphate-dependent aminotransferase family. It depends on pyridoxal 5'-phosphate as a cofactor.

It carries out the reaction L-leucine + 2-oxoglutarate = 4-methyl-2-oxopentanoate + L-glutamate. The catalysed reaction is L-isoleucine + 2-oxoglutarate = (S)-3-methyl-2-oxopentanoate + L-glutamate. The enzyme catalyses L-valine + 2-oxoglutarate = 3-methyl-2-oxobutanoate + L-glutamate. It participates in amino-acid biosynthesis; L-isoleucine biosynthesis; L-isoleucine from 2-oxobutanoate: step 4/4. Its pathway is amino-acid biosynthesis; L-leucine biosynthesis; L-leucine from 3-methyl-2-oxobutanoate: step 4/4. The protein operates within amino-acid biosynthesis; L-valine biosynthesis; L-valine from pyruvate: step 4/4. In terms of biological role, acts on leucine, isoleucine and valine. The sequence is that of Branched-chain-amino-acid aminotransferase (ilvE) from Pseudomonas aeruginosa (strain ATCC 15692 / DSM 22644 / CIP 104116 / JCM 14847 / LMG 12228 / 1C / PRS 101 / PAO1).